The following is a 1187-amino-acid chain: DENN domain and WD repeat-containing protein SCD1 (1187 aa).

The uDENN domain occupies 19 to 179 (TVDGDLGFHG…NVPLPTPGKD (161 aa)). The cDENN domain maps to 199 to 330 (SLPQADISLQ…EFSTLRNDIL (132 aa)). Positions 332–437 (LLHPNVVAID…ERRLSSDEKS (106 aa)) constitute a dDENN domain. Disordered regions lie at residues 508-536 (SGALESNGRHPPSSPPGKNTKEDNFSSME) and 765-793 (SAGLPSPRPKDVSVSDETQQPSEASGRSW). Residues 526-536 (NTKEDNFSSME) show a composition bias toward basic and acidic residues. The span at 779–793 (SDETQQPSEASGRSW) shows a compositional bias: polar residues. 8 WD repeats span residues 841-892 (GHGG…SELR), 897-934 (GHTGTVRAISSDRGKIVSGSDDLSVIVWDKQTTQLLEE), 937-975 (GHDSQVSCVKMLSGERVLTAAHDGTVKMWDVRTDMCVAT), 978-1017 (RCSSAILSLEYDDSTGILAAAGRDTVANIWDIRSGKQMHK), 1020-1057 (GHTKWIRSIRMVEDTLITGSDDWTARVWSVSRGSCDAV), 1060-1099 (CHAGPVQSVEYSPFDKGIITGSADGLLRFWENDEGGIKCV), 1104-1141 (LHSSSILSINAGENWLGIGAADNSMSLFHRPSNAGTKV), and 1152-1187 (RTAAVVRCVASDLERKRICSGGRNGVLRLWDATINI).

Interacts with FLS2. Expressed in roots, rosette and cauline leaves, buds and flowers.

The protein localises to the cell membrane. Its subcellular location is the cytoplasmic vesicle. It localises to the clathrin-coated vesicle. Involved in growth and development through its role in cytokinesis and polarized cell expansion. Required for plasma membrane internalization. May function in clathrin-mediated membrane trafficking, including plasma membrane endocytosis, essential to both cytokinesis and cell expansion. Acts as a negative regulator of basal resistance against bacteria. This Arabidopsis thaliana (Mouse-ear cress) protein is DENN domain and WD repeat-containing protein SCD1.